Consider the following 266-residue polypeptide: Type III pantothenate kinase (266 aa).

9 to 16 (DAGNSRIK) provides a ligand contact to ATP. Substrate is bound by residues Y96 and 103 to 106 (GSDR). D105 functions as the Proton acceptor in the catalytic mechanism. Position 129 (T129) interacts with ATP. T189 provides a ligand contact to substrate.

The protein belongs to the type III pantothenate kinase family. In terms of assembly, homodimer. Requires NH4(+) as cofactor. K(+) is required as a cofactor.

The protein localises to the cytoplasm. It carries out the reaction (R)-pantothenate + ATP = (R)-4'-phosphopantothenate + ADP + H(+). The protein operates within cofactor biosynthesis; coenzyme A biosynthesis; CoA from (R)-pantothenate: step 1/5. Its function is as follows. Catalyzes the phosphorylation of pantothenate (Pan), the first step in CoA biosynthesis. The chain is Type III pantothenate kinase from Burkholderia lata (strain ATCC 17760 / DSM 23089 / LMG 22485 / NCIMB 9086 / R18194 / 383).